The primary structure comprises 1018 residues: Thrombospondin type-1 domain-containing protein 4 (1018 aa).

A signal peptide spans 1–26; that stretch reads MVSYLTSCLSALSTLLLLLGSQLVCP. 3 disordered regions span residues 34–56, 116–240, and 534–623; these read KVPQ…SPGV, HRSQ…PSEA, and SPQV…NWKQ. The region spanning 54 to 307 is the TSP type-1 1 domain; the sequence is PGVWGSWGPW…YKLCNTNACP (254 aa). Residues 187–199 are compositionally biased toward basic residues; it reads QRLRRQRPSSRHS. Residues 216–230 show a composition bias toward polar residues; it reads HQFSHSQPLYQSDSG. Composition is skewed to basic and acidic residues over residues 558–573 and 592–603; these read QEDR…KEDS and RHPERFPSHRPD. TSP type-1 domains lie at 676 to 737, 739 to 792, 793 to 851, 852 to 911, and 912 to 968; these read CPAF…KICS, WQIR…DMGP, CAKS…GPCT, GKVE…HLKP, and CGAK…QDCV. One can recognise a PLAC domain in the interval 971 to 1008; it reads VDENCKDKYYNCNVVVQARLCVYNYYKTACCASCTRVA.

Isoform 2 interacts with FBN1. Isoform 2 may interact with TGFB1. As to expression, both isoforms are expressed in the embryo from 7 dpc through 17. Isoform 1 is widely expressed in adult tissues. Isoform 2 is detected in brain, spinal cord, eye, kidney, stomach and uterus. Mainly observed in fibrillar extracellular matrices in elastic tissues (at protein level).

Its subcellular location is the secreted. The protein resides in the extracellular space. The protein localises to the extracellular matrix. Its function is as follows. Promotes FBN1 matrix assembly. Attenuates TGFB signaling, possibly by accelerating the sequestration of large latent complexes of TGFB or active TGFB by FBN1 microfibril assembly, thereby negatively regulating the expression of TGFB regulatory targets, such as POSTN. The sequence is that of Thrombospondin type-1 domain-containing protein 4 (Thsd4) from Mus musculus (Mouse).